The chain runs to 592 residues: Guanylate-binding protein 1 (592 aa).

Residues 1–311 (MASEIHMTGP…NAISSGDLPC (311 aa)) form a GTPase domain (Globular) region. One can recognise a GB1/RHD3-type G domain in the interval 35–278 (TQPMVVVAIV…FCSYIFSNSK (244 aa)). Residues 45-52 (GLYRTGKS), 67-69 (LGS), and 97-101 (DTEGL) contribute to the GTP site. Phosphoserine is present on Ser156. Position 589 is a cysteine methyl ester (Cys589). Cys589 carries the S-farnesyl cysteine lipid modification. Thr590 is modified (phosphothreonine). Residues 590 to 592 (TIS) constitute a propeptide, removed in mature form.

It belongs to the TRAFAC class dynamin-like GTPase superfamily. GB1/RHD3 GTPase family. GB1 subfamily. As to quaternary structure, homodimer; homodimerization occurs upon GTP-binding and is required for the second hydrolysis step from GDP to GMP. Undergoes conformational changes and oligomerization upon GTP-binding and hydrolysis. Heterodimer with other family members, including GBP2, GBP3, GBP4 and GBP5. Dimerization regulates subcellular location to membranous structures. Interacts with SQSTM1. Interacts (when phosphorylated) with 14-3-3 protein sigma (SFN); leading to GBP1 retention in the cytosol and inactivation. Post-translationally, isoprenylation is required for proper subcellular location. Phosphorylated at Ser-156 by PIM1 in absence of infection, inhibits GBP1: phosphorylation promotes interaction with 14-3-3 protein sigma (SFN), leading to GBP1 retention in the cytosol. Dephosphorylated in response to infection, liberating GBP1.

It is found in the cytoplasmic vesicle membrane. Its subcellular location is the golgi apparatus membrane. It localises to the cell membrane. The protein localises to the cytoplasm. The protein resides in the cytosol. It is found in the secreted. The enzyme catalyses GTP + H2O = GDP + phosphate + H(+). It carries out the reaction GDP + H2O = GMP + phosphate + H(+). Functionally, interferon (IFN)-inducible GTPase that plays important roles in innate immunity against a diverse range of bacterial, viral and protozoan pathogens. Hydrolyzes GTP to GMP in two consecutive cleavage reactions: GTP is first hydrolyzed to GDP and then to GMP in a processive manner. Following infection, recruited to the pathogen-containing vacuoles or vacuole-escaped bacteria and promotes both inflammasome assembly and autophagy. Acts as a positive regulator of inflammasome assembly by facilitating the detection of inflammasome ligands from pathogens. Involved in the lysis of pathogen-containing vacuoles, releasing pathogens into the cytosol. Following pathogen release in the cytosol, forms a protein coat in a GTPase-dependent manner that encapsulates pathogens and promotes the detection of ligands by pattern recognition receptors. Plays a key role in inflammasome assembly in response to infection by Gram-negative bacteria: following pathogen release in the cytosol, forms a protein coat that encapsulates Gram-negative bacteria and directly binds to lipopolysaccharide (LPS), disrupting the O-antigen barrier and unmasking lipid A that is that detected by the non-canonical inflammasome effector CASP4/CASP11. Also promotes recruitment of proteins that mediate bacterial cytolysis, leading to release double-stranded DNA (dsDNA) that activates the AIM2 inflammasome. Involved in autophagy by regulating bacteriolytic peptide generation via its interaction with ubiquitin-binding protein SQSTM1, which delivers monoubiquitinated proteins to autolysosomes for the generation of bacteriolytic peptides. Confers protection to several pathogens, including the bacterial pathogens L.monocytogenes and M.bovis BCG as well as the protozoan pathogen T.gondii. Exhibits antiviral activity against influenza virus. This is Guanylate-binding protein 1 (GBP1) from Pongo abelii (Sumatran orangutan).